The following is a 65-amino-acid chain: Large ribosomal subunit protein bL33c (65 aa).

This sequence belongs to the bacterial ribosomal protein bL33 family.

It is found in the plastid. The protein localises to the chloroplast. This is Large ribosomal subunit protein bL33c from Chara vulgaris (Common stonewort).